A 79-amino-acid chain; its full sequence is Cell division protein ZapB (79 aa).

The stretch at 6 to 78 forms a coiled coil; it reads FEKLEVKVQQ…LRALLGKMEE (73 aa).

Belongs to the ZapB family. In terms of assembly, homodimer. The ends of the coiled-coil dimer bind to each other, forming polymers. Interacts with FtsZ.

The protein localises to the cytoplasm. Functionally, non-essential, abundant cell division factor that is required for proper Z-ring formation. It is recruited early to the divisome by direct interaction with FtsZ, stimulating Z-ring assembly and thereby promoting cell division earlier in the cell cycle. Its recruitment to the Z-ring requires functional FtsA or ZipA. The sequence is that of Cell division protein ZapB from Yersinia enterocolitica serotype O:8 / biotype 1B (strain NCTC 13174 / 8081).